The following is a 256-amino-acid chain: Imidazole glycerol phosphate synthase subunit HisF (256 aa).

Active-site residues include D11 and D130.

This sequence belongs to the HisA/HisF family. As to quaternary structure, heterodimer of HisH and HisF.

The protein resides in the cytoplasm. It carries out the reaction 5-[(5-phospho-1-deoxy-D-ribulos-1-ylimino)methylamino]-1-(5-phospho-beta-D-ribosyl)imidazole-4-carboxamide + L-glutamine = D-erythro-1-(imidazol-4-yl)glycerol 3-phosphate + 5-amino-1-(5-phospho-beta-D-ribosyl)imidazole-4-carboxamide + L-glutamate + H(+). Its pathway is amino-acid biosynthesis; L-histidine biosynthesis; L-histidine from 5-phospho-alpha-D-ribose 1-diphosphate: step 5/9. IGPS catalyzes the conversion of PRFAR and glutamine to IGP, AICAR and glutamate. The HisF subunit catalyzes the cyclization activity that produces IGP and AICAR from PRFAR using the ammonia provided by the HisH subunit. This Prochlorococcus marinus (strain MIT 9312) protein is Imidazole glycerol phosphate synthase subunit HisF.